Consider the following 213-residue polypeptide: Ribosomal RNA small subunit methyltransferase G (213 aa).

Residues Gly-83, Leu-88, 132–133 (IE), and Arg-146 contribute to the S-adenosyl-L-methionine site.

The protein belongs to the methyltransferase superfamily. RNA methyltransferase RsmG family.

It is found in the cytoplasm. It carries out the reaction guanosine(527) in 16S rRNA + S-adenosyl-L-methionine = N(7)-methylguanosine(527) in 16S rRNA + S-adenosyl-L-homocysteine. Functionally, specifically methylates the N7 position of guanine in position 527 of 16S rRNA. The sequence is that of Ribosomal RNA small subunit methyltransferase G from Granulibacter bethesdensis (strain ATCC BAA-1260 / CGDNIH1).